The chain runs to 425 residues: Glutamate-1-semialdehyde 2,1-aminomutase (425 aa).

Lys265 is modified (N6-(pyridoxal phosphate)lysine).

Belongs to the class-III pyridoxal-phosphate-dependent aminotransferase family. HemL subfamily. As to quaternary structure, homodimer. Pyridoxal 5'-phosphate is required as a cofactor.

Its subcellular location is the cytoplasm. It catalyses the reaction (S)-4-amino-5-oxopentanoate = 5-aminolevulinate. It participates in porphyrin-containing compound metabolism; protoporphyrin-IX biosynthesis; 5-aminolevulinate from L-glutamyl-tRNA(Glu): step 2/2. The protein is Glutamate-1-semialdehyde 2,1-aminomutase of Clostridium perfringens (strain SM101 / Type A).